The chain runs to 73 residues: MRTTLDLDDDVIAAARELASSQRRSLGSVISELARRGLMPGRVEADDGLPVIRVPAGTPPITPEMVRRALDED.

Functionally, probable antitoxin component of a type II toxin-antitoxin (TA) system. Its putative cognate toxin is VapC38. In Mycobacterium tuberculosis (strain ATCC 25618 / H37Rv), this protein is Putative antitoxin VapB38 (vapB38).